The chain runs to 393 residues: Cyclic GMP-AMP synthase-like receptor 1 (393 aa).

Mg(2+)-binding residues include glutamate 89, aspartate 91, and aspartate 205. 89–91 (EFD) provides a ligand contact to ATP. Residues aspartate 205 and 251 to 258 (RASFYEAE) each bind GTP. ATP-binding positions include 255–258 (YEAE), lysine 276, and 289–293 (SYHIK).

Belongs to the mab-21 family. The cofactor is Mg(2+). Mn(2+) is required as a cofactor.

The catalysed reaction is GTP + ATP = 3',2'-cGAMP + 2 diphosphate. It carries out the reaction GTP + ATP = pppA(2'-5')pG + diphosphate. The enzyme catalyses pppA(2'-5')pG = 3',2'-cGAMP + diphosphate. With respect to regulation, the enzyme activity is specifically activated by double-stranded RNA (dsRNA). Recognizes long dsRNA (&gt;30 bp) with no preference for 5' RNA phosphorylation. Its function is as follows. Nucleotidyltransferase that catalyzes the formation of cyclic GMP-AMP (3',2'-cGAMP) from ATP and GTP and plays a key role in innate immunity. Synthesizes 3',2'-cGAMP in a two-step reaction through production of the linear intermediate pppA(2'-5')pG. Acts as a key sensor of double-stranded RNA (dsRNA), the presence of dsRNA in the cytoplasm being a danger signal that triggers the immune responses. Directly binds dsRNA longer than 35 bp, activating the nucleotidyltransferase activity, leading to synthesis of 3',2'-cGAMP, a second messenger that binds to and activates Sting, thereby triggering the antiviral immune response via activation of the NF-kappa-B transcription factor Rel (Relish). The chain is Cyclic GMP-AMP synthase-like receptor 1 from Drosophila simulans (Fruit fly).